Here is a 121-residue protein sequence, read N- to C-terminus: Small ribosomal subunit protein uS13 (121 aa).

A disordered region spans residues 88 to 121 (GMRHRRGLPVRGQHTKNNARTRKGKAVAIANKKK).

The protein belongs to the universal ribosomal protein uS13 family. As to quaternary structure, part of the 30S ribosomal subunit. Forms a loose heterodimer with protein S19. Forms two bridges to the 50S subunit in the 70S ribosome.

In terms of biological role, located at the top of the head of the 30S subunit, it contacts several helices of the 16S rRNA. In the 70S ribosome it contacts the 23S rRNA (bridge B1a) and protein L5 of the 50S subunit (bridge B1b), connecting the 2 subunits; these bridges are implicated in subunit movement. Contacts the tRNAs in the A and P-sites. The protein is Small ribosomal subunit protein uS13 of Limosilactobacillus reuteri subsp. reuteri (strain JCM 1112) (Lactobacillus reuteri).